Reading from the N-terminus, the 349-residue chain is Protein-glutamate methylesterase/protein-glutamine glutaminase (349 aa).

A Response regulatory domain is found at 5–122 (RVLSVDDSAL…REGMLAYNEM (118 aa)). D56 bears the 4-aspartylphosphate mark. Residues 152-344 (LLSSEKLIAI…QQMLAKISAG (193 aa)) enclose the CheB-type methylesterase domain. Active-site residues include S164, H190, and D286.

It belongs to the CheB family. Interacts with CheA. Binds to a C-terminal pentapeptide sequence carried by certain receptors. Post-translationally, phosphorylated by CheA. Phosphorylation of the N-terminal regulatory domain activates the methylesterase activity.

Its subcellular location is the cytoplasm. It catalyses the reaction [protein]-L-glutamate 5-O-methyl ester + H2O = L-glutamyl-[protein] + methanol + H(+). It carries out the reaction L-glutaminyl-[protein] + H2O = L-glutamyl-[protein] + NH4(+). Methylesterase activity is activated via phosphorylation in response to negative chemotactic stimuli and is inhibited in the presence of attractants. Activation requires both CheA and CheW. In terms of biological role, involved in chemotaxis. Part of a chemotaxis signal transduction system that modulates chemotaxis in response to various stimuli. Catalyzes the demethylation of specific methylglutamate residues introduced into the chemoreceptors (methyl-accepting chemotaxis proteins or MCP) by CheR. Also mediates the irreversible deamidation of specific glutamine residues to glutamic acid. Catalyzes its own deactivation by removing the activating phosphoryl group. This Escherichia coli (strain K12) protein is Protein-glutamate methylesterase/protein-glutamine glutaminase.